We begin with the raw amino-acid sequence, 292 residues long: Inositol oxygenase (292 aa).

Substrate-binding positions include Arg33 and Asp88 to Ser90. Fe cation is bound by residues His101, His128, and Asp129. Residues Lys132 and Gly149–Asp150 contribute to the substrate site. Residues His201, His227, and Asp260 each contribute to the Fe cation site. Position 227-228 (His227–Ser228) interacts with substrate.

It belongs to the myo-inositol oxygenase family. Fe cation is required as a cofactor.

The protein resides in the cytoplasm. The enzyme catalyses myo-inositol + O2 = D-glucuronate + H2O + H(+). It participates in polyol metabolism; myo-inositol degradation into D-glucuronate; D-glucuronate from myo-inositol: step 1/1. The chain is Inositol oxygenase (miox) from Dictyostelium discoideum (Social amoeba).